A 301-amino-acid chain; its full sequence is Probable alpha-L-glutamate ligase (301 aa).

One can recognise an ATP-grasp domain in the interval leucine 104 to glutamate 287. ATP is bound by residues lysine 141, glutamate 178–phenylalanine 179, aspartate 187, and arginine 211–asparagine 213. Mg(2+) is bound by residues aspartate 248, glutamate 260, and asparagine 262. Mn(2+) is bound by residues aspartate 248, glutamate 260, and asparagine 262.

It belongs to the RimK family. Mg(2+) is required as a cofactor. It depends on Mn(2+) as a cofactor.

The sequence is that of Probable alpha-L-glutamate ligase from Cellvibrio japonicus (strain Ueda107) (Pseudomonas fluorescens subsp. cellulosa).